The sequence spans 159 residues: Ribosome maturation factor RimP (159 aa).

The protein belongs to the RimP family.

It localises to the cytoplasm. Its function is as follows. Required for maturation of 30S ribosomal subunits. This is Ribosome maturation factor RimP from Bordetella avium (strain 197N).